We begin with the raw amino-acid sequence, 263 residues long: Meiotic drive suppressor wtf6 (263 aa).

A disordered region spans residues 1–68 (MKNNYTSLKS…REKNPSRSTD (68 aa)). Over residues 19–30 (KTDHEIDLEKGP) the composition is skewed to basic and acidic residues. 3 helical membrane passes run 73-93 (FLIKLLISFTSIILFNAPAVC), 110-130 (WTLFGFWCLVCTLALISLTYF), and 201-221 (SASAFTFMAVSSILIFIAETV).

Belongs to the WTF family. As to quaternary structure, homomer. Interacts with other proteins that exhibit high sequence similarity.

It localises to the spore membrane. The protein localises to the vacuole membrane. Acts as a suppressor component of the dual wtf meiotic drive system, and can suppress but not confer meiotic drive by compatible poisons. Wtf meiotic drive systems promote unequal transmission of alleles from the parental zygote to progeny spores by encoding a poison and an antidote from the same locus; the poison is trans-acting and forms toxic aggregates in all spores within an ascus, wherease the antidote is spore-specific and targets aggregates for degradation by the vacuole. Meiotic drive by wtf systems therefore lead to poisoning of all progeny that do not inherit the dual poison/antidote allele, or express a compatible antidote. This chain is Meiotic drive suppressor wtf6, found in Schizosaccharomyces kambucha (Fission yeast).